The sequence spans 306 residues: Apolipoprotein E (306 aa).

The N-terminal stretch at 1–18 (MKVLWAVLVVTLLAGCQA) is a signal peptide. 8 tandem repeats follow at residues 81 to 102 (VLME…QELG), 103 to 124 (PMAE…ARLG), 125 to 146 (ADME…TMLG), 147 to 168 (QSAE…KRLL), 169 to 190 (RDAE…EGAE), 191 to 212 (RGVS…LRAA), 213 to 230 (QTSQ…ERLR), and 231 to 252 (GRLE…EQME). The segment at 81 to 252 (VLMEDTMKEV…RLDVVREQME (172 aa)) is 8 X 22 AA approximate tandem repeats. Residue methionine 144 is modified to Methionine sulfoxide. Serine 148 is modified (phosphoserine). Residues 159-169 (HLRKLRKRLLR) are LDL and other lipoprotein receptors binding. 163 to 166 (LRKR) contributes to the heparin binding site. Residues 211–280 (AAQTSQPLRE…GWFEPVVEDM (70 aa)) form a lipid-binding and lipoprotein association region. Position 226–233 (226–233 (GERLRGRL)) interacts with heparin. Positions 268–280 (RLKGWFEPVVEDM) are specificity for association with VLDL.

It belongs to the apolipoprotein A1/A4/E family. Homotetramer. May interact with ABCA1; functionally associated with ABCA1 in the biogenesis of HDLs. May interact with APP/A4 amyloid-beta peptide; the interaction is extremely stable in vitro but its physiological significance is unclear. May interact with MAPT. May interact with MAP2. In the cerebrospinal fluid, interacts with secreted SORL1. Interacts with PMEL; this allows the loading of PMEL luminal fragment on ILVs to induce fibril nucleation. In terms of processing, APOE exists as multiple glycosylated and sialylated glycoforms within cells and in plasma. The extent of glycosylation and sialylation are tissue and context specific. Glycated in plasma VLDL. Post-translationally, phosphorylated by FAM20C in the extracellular medium.

The protein localises to the secreted. It localises to the extracellular space. Its subcellular location is the extracellular matrix. It is found in the extracellular vesicle. The protein resides in the endosome. The protein localises to the multivesicular body. APOE is an apolipoprotein, a protein associating with lipid particles, that mainly functions in lipoprotein-mediated lipid transport between organs via the plasma and interstitial fluids. APOE is a core component of plasma lipoproteins and is involved in their production, conversion and clearance. Apolipoproteins are amphipathic molecules that interact both with lipids of the lipoprotein particle core and the aqueous environment of the plasma. As such, APOE associates with chylomicrons, chylomicron remnants, very low density lipoproteins (VLDL) and intermediate density lipoproteins (IDL) but shows a preferential binding to high-density lipoproteins (HDL). It also binds a wide range of cellular receptors including the LDL receptor/LDLR, the LDL receptor-related proteins LRP1, LRP2 and LRP8 and the very low-density lipoprotein receptor/VLDLR that mediate the cellular uptake of the APOE-containing lipoprotein particles. Finally, APOE also has a heparin-binding activity and binds heparan-sulfate proteoglycans on the surface of cells, a property that supports the capture and the receptor-mediated uptake of APOE-containing lipoproteins by cells. A main function of APOE is to mediate lipoprotein clearance through the uptake of chylomicrons, VLDLs, and HDLs by hepatocytes. APOE is also involved in the biosynthesis by the liver of VLDLs as well as their uptake by peripheral tissues ensuring the delivery of triglycerides and energy storage in muscle, heart and adipose tissues. By participating in the lipoprotein-mediated distribution of lipids among tissues, APOE plays a critical role in plasma and tissues lipid homeostasis. APOE is also involved in two steps of reverse cholesterol transport, the HDLs-mediated transport of cholesterol from peripheral tissues to the liver, and thereby plays an important role in cholesterol homeostasis. First, it is functionally associated with ABCA1 in the biogenesis of HDLs in tissues. Second, it is enriched in circulating HDLs and mediates their uptake by hepatocytes. APOE also plays an important role in lipid transport in the central nervous system, regulating neuron survival and sprouting. The polypeptide is Apolipoprotein E (APOE) (Hystrix brachyura (Malayan porcupine)).